Consider the following 413-residue polypeptide: MQRIIQFFSQRATTLFFPMALILYDFAAYLTTDLIQPGIINVVRDFNADVSLAPASVSLYLAGGMALQWLLGPLSDRIGRRPVLIAGALIFTLACAATLLTTSMTQFLVARFVQGTSICFIATVGYVTVQEAFGQTKAIKLMAIITSIVLVAPVIGPLSGAALMHFVHWKVLFGIIAVMGLLALCGLLLAMPETVQRGAVPFSAVSVLRDFRNVFRNPIFLTGAATLSLSYIPMMSWVAVSPVILIDAGGMSTSQFAWAQVPVFGAVIVANMIVVRLVKDPTRPRFIWRAVPIQLSGLATLLLGNLLLPHVWLWSVLGTSLYAFGIGMIFPTLFRFTLFSNNLPKGTVSASLNMVILTVMAVSVEVGRWLWFHGGRLPFHLLAAVAGVIVVFTLATLLQRVRQHEAAELAAEK.

Topologically, residues 1–14 (MQRIIQFFSQRATT) are cytoplasmic. A helical transmembrane segment spans residues 15–35 (LFFPMALILYDFAAYLTTDLI). At 36 to 51 (QPGIINVVRDFNADVS) the chain is on the periplasmic side. A helical transmembrane segment spans residues 52 to 72 (LAPASVSLYLAGGMALQWLLG). The Cytoplasmic segment spans residues 73–81 (PLSDRIGRR). The chain crosses the membrane as a helical span at residues 82-102 (PVLIAGALIFTLACAATLLTT). Over 103–106 (SMTQ) the chain is Periplasmic. The helical transmembrane segment at 107 to 127 (FLVARFVQGTSICFIATVGYV) threads the bilayer. Residues 128–140 (TVQEAFGQTKAIK) are Cytoplasmic-facing. The chain crosses the membrane as a helical span at residues 141–161 (LMAIITSIVLVAPVIGPLSGA). Topologically, residues 162–170 (ALMHFVHWK) are periplasmic. A helical transmembrane segment spans residues 171–191 (VLFGIIAVMGLLALCGLLLAM). Residues 192–225 (PETVQRGAVPFSAVSVLRDFRNVFRNPIFLTGAA) lie on the Cytoplasmic side of the membrane. The chain crosses the membrane as a helical span at residues 226–246 (TLSLSYIPMMSWVAVSPVILI). The Periplasmic segment spans residues 247-254 (DAGGMSTS). A helical membrane pass occupies residues 255-275 (QFAWAQVPVFGAVIVANMIVV). Over 276-289 (RLVKDPTRPRFIWR) the chain is Cytoplasmic. The next 2 membrane-spanning stretches (helical) occupy residues 290-310 (AVPIQLSGLATLLLGNLLLPH) and 311-331 (VWLWSVLGTSLYAFGIGMIFP). The Cytoplasmic segment spans residues 332-351 (TLFRFTLFSNNLPKGTVSAS). A helical transmembrane segment spans residues 352–372 (LNMVILTVMAVSVEVGRWLWF). The Periplasmic portion of the chain corresponds to 373 to 376 (HGGR). Residues 377–397 (LPFHLLAAVAGVIVVFTLATL) form a helical membrane-spanning segment. Over 398–413 (LQRVRQHEAAELAAEK) the chain is Cytoplasmic.

The protein belongs to the major facilitator superfamily.

The protein localises to the cell inner membrane. Proton-dependent efflux pump. Confers resistance to a broad spectrum of chemically unrelated substrates. This is Multidrug resistance protein MdtM (mdtM) from Salmonella typhimurium (strain LT2 / SGSC1412 / ATCC 700720).